Here is a 629-residue protein sequence, read N- to C-terminus: tRNA uridine 5-carboxymethylaminomethyl modification enzyme MnmG (629 aa).

Residues 13-18 (GGGHAG), V125, and S180 contribute to the FAD site. Position 273–287 (273–287 (GPRYCPSIEDKVMRF)) interacts with NAD(+). An FAD-binding site is contributed by Q370.

Belongs to the MnmG family. In terms of assembly, homodimer. Heterotetramer of two MnmE and two MnmG subunits. Requires FAD as cofactor.

Its subcellular location is the cytoplasm. Its function is as follows. NAD-binding protein involved in the addition of a carboxymethylaminomethyl (cmnm) group at the wobble position (U34) of certain tRNAs, forming tRNA-cmnm(5)s(2)U34. This chain is tRNA uridine 5-carboxymethylaminomethyl modification enzyme MnmG, found in Escherichia coli (strain SMS-3-5 / SECEC).